The primary structure comprises 384 residues: Galactokinase (384 aa).

34–37 (EHTD) contacts substrate. An ATP-binding site is contributed by 123 to 129 (SSGLSSS). Positions 129 and 161 each coordinate Mg(2+). The active-site Proton acceptor is the D173. Y222 contacts substrate.

Belongs to the GHMP kinase family. GalK subfamily.

The protein resides in the cytoplasm. The enzyme catalyses alpha-D-galactose + ATP = alpha-D-galactose 1-phosphate + ADP + H(+). The protein operates within carbohydrate metabolism; galactose metabolism. Functionally, catalyzes the transfer of the gamma-phosphate of ATP to D-galactose to form alpha-D-galactose-1-phosphate (Gal-1-P). This is Galactokinase from Actinobacillus pleuropneumoniae serotype 5b (strain L20).